Consider the following 363-residue polypeptide: DNA replication and repair protein RecF (363 aa).

G30 to T37 lines the ATP pocket.

The protein belongs to the RecF family.

It localises to the cytoplasm. Functionally, the RecF protein is involved in DNA metabolism; it is required for DNA replication and normal SOS inducibility. RecF binds preferentially to single-stranded, linear DNA. It also seems to bind ATP. The polypeptide is DNA replication and repair protein RecF (Vibrio cholerae serotype O1 (strain ATCC 39541 / Classical Ogawa 395 / O395)).